A 316-amino-acid chain; its full sequence is Adenine deaminase (316 aa).

Zn(2+)-binding residues include His-14, His-16, and His-194. Glu-197 (proton donor) is an active-site residue. Asp-275 contacts Zn(2+). Asp-276 is a substrate binding site.

Belongs to the metallo-dependent hydrolases superfamily. Adenosine and AMP deaminases family. Adenine deaminase type 2 subfamily. The cofactor is Zn(2+).

The catalysed reaction is adenine + H2O + H(+) = hypoxanthine + NH4(+). Functionally, catalyzes the hydrolytic deamination of adenine to hypoxanthine. Plays an important role in the purine salvage pathway and in nitrogen catabolism. This chain is Adenine deaminase, found in Stutzerimonas stutzeri (strain A1501) (Pseudomonas stutzeri).